The sequence spans 442 residues: D-aminoacyl-tRNA deacylase (442 aa).

This sequence belongs to the DtdA deacylase family. In terms of assembly, monomer. Zn(2+) serves as cofactor.

It carries out the reaction a D-aminoacyl-tRNA + H2O = a tRNA + a D-alpha-amino acid + H(+). The enzyme catalyses glycyl-tRNA(Ala) + H2O = tRNA(Ala) + glycine + H(+). In terms of biological role, D-aminoacyl-tRNA deacylase with broad substrate specificity. By recycling D-aminoacyl-tRNA to D-amino acids and free tRNA molecules, this enzyme counteracts the toxicity associated with the formation of D-aminoacyl-tRNA entities in vivo. The protein is D-aminoacyl-tRNA deacylase of Methanospirillum hungatei JF-1 (strain ATCC 27890 / DSM 864 / NBRC 100397 / JF-1).